A 525-amino-acid polypeptide reads, in one-letter code: GMP synthase [glutamine-hydrolyzing] (525 aa).

Residues 9–207 form the Glutamine amidotransferase type-1 domain; that stretch reads RILILDFGSQ…VMDICKCEKL (199 aa). Residue Cys86 is the Nucleophile of the active site. Catalysis depends on residues His181 and Glu183. In terms of domain architecture, GMPS ATP-PPase spans 208–400; it reads WTAGAIIEDA…LGLPYDMLYR (193 aa). 235–241 contacts ATP; sequence SGGVDSS.

Homodimer.

The enzyme catalyses XMP + L-glutamine + ATP + H2O = GMP + L-glutamate + AMP + diphosphate + 2 H(+). The protein operates within purine metabolism; GMP biosynthesis; GMP from XMP (L-Gln route): step 1/1. Functionally, catalyzes the synthesis of GMP from XMP. The polypeptide is GMP synthase [glutamine-hydrolyzing] (Alteromonas mediterranea (strain DSM 17117 / CIP 110805 / LMG 28347 / Deep ecotype)).